The chain runs to 172 residues: Protein GrpE (172 aa).

This sequence belongs to the GrpE family. Homodimer.

Its subcellular location is the cytoplasm. Its function is as follows. Participates actively in the response to hyperosmotic and heat shock by preventing the aggregation of stress-denatured proteins, in association with DnaK and GrpE. It is the nucleotide exchange factor for DnaK and may function as a thermosensor. Unfolded proteins bind initially to DnaJ; upon interaction with the DnaJ-bound protein, DnaK hydrolyzes its bound ATP, resulting in the formation of a stable complex. GrpE releases ADP from DnaK; ATP binding to DnaK triggers the release of the substrate protein, thus completing the reaction cycle. Several rounds of ATP-dependent interactions between DnaJ, DnaK and GrpE are required for fully efficient folding. This Thermotoga maritima (strain ATCC 43589 / DSM 3109 / JCM 10099 / NBRC 100826 / MSB8) protein is Protein GrpE.